The sequence spans 147 residues: Hemoglobin subunit beta (147 aa).

Position 2 is an N-acetylvaline (Val-2). Residues 3–147 (HLTGEEKGIV…VATALAHKYH (145 aa)) form the Globin domain. Thr-13 carries the phosphothreonine modification. Ser-45 is modified (phosphoserine). Position 60 is an N6-acetyllysine (Lys-60). His-64 is a heme b binding site. Lys-83 is subject to N6-acetyllysine. His-93 serves as a coordination point for heme b. Cys-94 is subject to S-nitrosocysteine. An N6-acetyllysine modification is found at Lys-145.

Belongs to the globin family. Heterotetramer of two alpha chains and two beta chains. In terms of tissue distribution, red blood cells.

Functionally, involved in oxygen transport from the lung to the various peripheral tissues. The sequence is that of Hemoglobin subunit beta (HBB) from Rhinolophus ferrumequinum (Greater horseshoe bat).